We begin with the raw amino-acid sequence, 252 residues long: Probable transcriptional regulatory protein Npun_R5651 (252 aa).

This sequence belongs to the TACO1 family.

Its subcellular location is the cytoplasm. The polypeptide is Probable transcriptional regulatory protein Npun_R5651 (Nostoc punctiforme (strain ATCC 29133 / PCC 73102)).